Consider the following 553-residue polypeptide: MDMVAHAEINNLSFVYADENEKALQHISLSVQKGEFIALAGGSGSGKTTLLKHLKKELLPIGKRTGDTYYDGTLLENVPDLLSAQEIGMVFQNPENQLVMDTVIQELAFSLENIGLPSHIIQKRIAELISFLGFQDLLHQSVHTLSGGQKQLVNLAAVLVMQPKLLLLDEPTAQLDPIAAKEFLGLLKRINEELGITIVLSEHRLDEVIPLATRVICMNNGRIVYDGSPKRVIANMWEVEGFRPFIPQIPRLFLEWNAKDIPFTVREAQMKMNDFSAISYVNEPIVQREKQEVILSAEHISFQYEKNSPLILRDLTVSIEKGKWVALVGKNGTGKSTLLTILAGLQKARRGKVKWNGKVIHKIDSKERFKSIGYVSQHPYYHFTFDTVWDEVYERARELYGEQGKEIAEQQLKKFWLYALKERHPHDCSGGEQQLLALCTTLLSKPTLLLLDEPTKGLDPWKKERVGELFRKLQKEGTTIVMATHDIEFAAKYVDQCMMLFDGAVIMNDAPKEFFSGNFFYTTSINRFIRKELPYALTWEDVYEACPNDMLHS.

2 ABC transporter domains span residues 7–245 (AEIN…FRPF) and 295–527 (LSAE…SINR). ATP contacts are provided by residues 41–48 (GGSGSGKT) and 329–336 (GKNGTGKS).

Belongs to the ABC transporter superfamily.

It is found in the cell membrane. Its function is as follows. Probably part of an ABC transporter complex. Responsible for energy coupling to the transport system. The chain is Putative ABC transporter ATP-binding protein BCE_3323 from Bacillus cereus (strain ATCC 10987 / NRS 248).